Here is a 374-residue protein sequence, read N- to C-terminus: Flagellar P-ring protein (374 aa).

Residues 1–29 (MPGVGISRIVRIAVAALVALAPLMTPAHA) form the signal peptide.

This sequence belongs to the FlgI family. The basal body constitutes a major portion of the flagellar organelle and consists of four rings (L,P,S, and M) mounted on a central rod.

The protein localises to the periplasm. It is found in the bacterial flagellum basal body. In terms of biological role, assembles around the rod to form the L-ring and probably protects the motor/basal body from shearing forces during rotation. The chain is Flagellar P-ring protein from Nitrobacter hamburgensis (strain DSM 10229 / NCIMB 13809 / X14).